A 227-amino-acid chain; its full sequence is MFDFIIDFETMGSGEKAAVIDLAVIAFDPNPEVVETFDELVSRGIKIKFDLKSQKGHRLFTKSTIEWWKNQSPEARKNIAPSDEDVSTIDGIAKFNDYINAHNIDPWKSQGWCRGMSFDFPILVDLIRDIQRLNGVSENELDTFKLEPCKFWNQRDIRTRIEALLLVRDMTTCPLPKGTLDGFVAHDSIHDCAKDILMMKYALRYAMGLEDAPSEEECDPLSLPTKR.

It carries out the reaction Exonucleolytic cleavage in the 3'- to 5'-direction to yield nucleoside 5'-phosphates.. In terms of biological role, 3'-5' exonuclease that preferentially uses ssDNA as substrate. Plays a role in group I intron homing. May play a role in the final step of host DNA degradation, by scavenging DNA into mononucleotides. This chain is Exodeoxyribonuclease (dexA), found in Escherichia coli (Bacteriophage T4).